We begin with the raw amino-acid sequence, 483 residues long: Glutamate--tRNA ligase 1 (483 aa).

Positions 9-19 (PSPTGFLHIGG) match the 'HIGH' region motif. The 'KMSKS' region motif lies at 238–242 (KLSKR). Lys-241 contacts ATP.

The protein belongs to the class-I aminoacyl-tRNA synthetase family. Glutamate--tRNA ligase type 1 subfamily. As to quaternary structure, monomer.

It is found in the cytoplasm. It catalyses the reaction tRNA(Glu) + L-glutamate + ATP = L-glutamyl-tRNA(Glu) + AMP + diphosphate. In terms of biological role, catalyzes the attachment of glutamate to tRNA(Glu) in a two-step reaction: glutamate is first activated by ATP to form Glu-AMP and then transferred to the acceptor end of tRNA(Glu). The chain is Glutamate--tRNA ligase 1 from Bartonella henselae (strain ATCC 49882 / DSM 28221 / CCUG 30454 / Houston 1) (Rochalimaea henselae).